Consider the following 318-residue polypeptide: 1-aminocyclopropane-1-carboxylate oxidase (318 aa).

The Fe2OG dioxygenase domain maps to 151–251 (PTFGTKVSNY…RMSIASFYNP (101 aa)). Residues His175, Asp177, and His232 each contribute to the Fe cation site.

This sequence belongs to the iron/ascorbate-dependent oxidoreductase family. Fe cation is required as a cofactor.

The enzyme catalyses 1-aminocyclopropane-1-carboxylate + L-ascorbate + O2 = ethene + L-dehydroascorbate + hydrogen cyanide + CO2 + 2 H2O. Its pathway is alkene biosynthesis; ethylene biosynthesis via S-adenosyl-L-methionine; ethylene from S-adenosyl-L-methionine: step 2/2. This is 1-aminocyclopropane-1-carboxylate oxidase (ACO) from Dendrobium crumenatum (Tropical pigeon orchid).